A 375-amino-acid chain; its full sequence is Palmitoyltransferase PFA4 (375 aa).

Residues M1–W9 lie on the Cytoplasmic side of the membrane. A helical membrane pass occupies residues L10 to V30. At L31–N33 the chain is on the lumenal side. Residues F34–Y54 traverse the membrane as a helical segment. Residues W55–P121 are Cytoplasmic-facing. The DHHC domain occupies N78–F128. The S-palmitoyl cysteine intermediate role is filled by C108. A helical membrane pass occupies residues H122 to V142. Over K143–L164 the chain is Lumenal. The chain crosses the membrane as a helical span at residues I165–F185. Topologically, residues V186–E375 are cytoplasmic.

This sequence belongs to the DHHC palmitoyltransferase family. PFA4 subfamily.

Its subcellular location is the endoplasmic reticulum membrane. It catalyses the reaction L-cysteinyl-[protein] + hexadecanoyl-CoA = S-hexadecanoyl-L-cysteinyl-[protein] + CoA. Mediates the reversible addition of palmitate to target proteins, thereby regulating their membrane association and biological function. The chain is Palmitoyltransferase PFA4 from Eremothecium gossypii (strain ATCC 10895 / CBS 109.51 / FGSC 9923 / NRRL Y-1056) (Yeast).